The chain runs to 215 residues: Protein-L-isoaspartate O-methyltransferase (215 aa).

Residue serine 62 is part of the active site.

Belongs to the methyltransferase superfamily. L-isoaspartyl/D-aspartyl protein methyltransferase family.

It localises to the cytoplasm. It catalyses the reaction [protein]-L-isoaspartate + S-adenosyl-L-methionine = [protein]-L-isoaspartate alpha-methyl ester + S-adenosyl-L-homocysteine. In terms of biological role, catalyzes the methyl esterification of L-isoaspartyl residues in peptides and proteins that result from spontaneous decomposition of normal L-aspartyl and L-asparaginyl residues. It plays a role in the repair and/or degradation of damaged proteins. The protein is Protein-L-isoaspartate O-methyltransferase of Ruegeria sp. (strain TM1040) (Silicibacter sp.).